Here is a 710-residue protein sequence, read N- to C-terminus: Adenylosuccinate synthetase (710 aa).

Disordered regions lie at residues methionine 1–alanine 53 and aspartate 84–serine 110. Polar residues-rich tracts occupy residues tyrosine 10 to alanine 27 and alanine 101 to serine 110. Residues glycine 180–lysine 186 and glycine 210–threonine 212 each bind GTP. Aspartate 181 functions as the Proton acceptor in the catalytic mechanism. Residues aspartate 181 and glycine 210 each coordinate Mg(2+). Residues aspartate 181–lysine 184, asparagine 208–histidine 211, threonine 295, lysine 309, glutamine 421, threonine 437, and lysine 567 contribute to the IMP site. The active-site Proton donor is the histidine 211. Alanine 563–arginine 569 serves as a coordination point for substrate. GTP contacts are provided by residues arginine 569 and glycine 697–glycine 699.

It belongs to the adenylosuccinate synthetase family. As to quaternary structure, homodimer. The cofactor is Mg(2+).

The protein resides in the cytoplasm. It catalyses the reaction IMP + L-aspartate + GTP = N(6)-(1,2-dicarboxyethyl)-AMP + GDP + phosphate + 2 H(+). The protein operates within purine metabolism; AMP biosynthesis via de novo pathway; AMP from IMP: step 1/2. Its function is as follows. Plays an important role in the salvage pathway for purine nucleotide biosynthesis. Catalyzes the first committed step in the biosynthesis of AMP from IMP. This chain is Adenylosuccinate synthetase (ADSS), found in Leishmania donovani.